The primary structure comprises 485 residues: Glutamyl-tRNA(Gln) amidotransferase subunit A (485 aa).

Active-site charge relay system residues include lysine 79 and serine 154. Serine 178 functions as the Acyl-ester intermediate in the catalytic mechanism.

The protein belongs to the amidase family. GatA subfamily. Heterotrimer of A, B and C subunits.

It carries out the reaction L-glutamyl-tRNA(Gln) + L-glutamine + ATP + H2O = L-glutaminyl-tRNA(Gln) + L-glutamate + ADP + phosphate + H(+). In terms of biological role, allows the formation of correctly charged Gln-tRNA(Gln) through the transamidation of misacylated Glu-tRNA(Gln) in organisms which lack glutaminyl-tRNA synthetase. The reaction takes place in the presence of glutamine and ATP through an activated gamma-phospho-Glu-tRNA(Gln). The polypeptide is Glutamyl-tRNA(Gln) amidotransferase subunit A (Bacillus pumilus (strain SAFR-032)).